Consider the following 375-residue polypeptide: Queuine tRNA-ribosyltransferase (375 aa).

The active-site Proton acceptor is the aspartate 89. Substrate-binding positions include 89–93, aspartate 143, glutamine 187, and glycine 214; that span reads DSGGF. The RNA binding stretch occupies residues 245-251; sequence GVGKPED. Aspartate 264 (nucleophile) is an active-site residue. The RNA binding; important for wobble base 34 recognition stretch occupies residues 269-273; that stretch reads TRNAR. Zn(2+) contacts are provided by cysteine 302, cysteine 304, cysteine 307, and histidine 333.

Belongs to the queuine tRNA-ribosyltransferase family. Homodimer. Within each dimer, one monomer is responsible for RNA recognition and catalysis, while the other monomer binds to the replacement base PreQ1. The cofactor is Zn(2+).

The catalysed reaction is 7-aminomethyl-7-carbaguanine + guanosine(34) in tRNA = 7-aminomethyl-7-carbaguanosine(34) in tRNA + guanine. It participates in tRNA modification; tRNA-queuosine biosynthesis. Its function is as follows. Catalyzes the base-exchange of a guanine (G) residue with the queuine precursor 7-aminomethyl-7-deazaguanine (PreQ1) at position 34 (anticodon wobble position) in tRNAs with GU(N) anticodons (tRNA-Asp, -Asn, -His and -Tyr). Catalysis occurs through a double-displacement mechanism. The nucleophile active site attacks the C1' of nucleotide 34 to detach the guanine base from the RNA, forming a covalent enzyme-RNA intermediate. The proton acceptor active site deprotonates the incoming PreQ1, allowing a nucleophilic attack on the C1' of the ribose to form the product. After dissociation, two additional enzymatic reactions on the tRNA convert PreQ1 to queuine (Q), resulting in the hypermodified nucleoside queuosine (7-(((4,5-cis-dihydroxy-2-cyclopenten-1-yl)amino)methyl)-7-deazaguanosine). This Enterobacter sp. (strain 638) protein is Queuine tRNA-ribosyltransferase.